The primary structure comprises 252 residues: 2-succinyl-6-hydroxy-2,4-cyclohexadiene-1-carboxylate synthase (252 aa).

The protein belongs to the AB hydrolase superfamily. MenH family. As to quaternary structure, monomer.

The catalysed reaction is 5-enolpyruvoyl-6-hydroxy-2-succinyl-cyclohex-3-ene-1-carboxylate = (1R,6R)-6-hydroxy-2-succinyl-cyclohexa-2,4-diene-1-carboxylate + pyruvate. The protein operates within quinol/quinone metabolism; 1,4-dihydroxy-2-naphthoate biosynthesis; 1,4-dihydroxy-2-naphthoate from chorismate: step 3/7. It participates in quinol/quinone metabolism; menaquinone biosynthesis. In terms of biological role, catalyzes a proton abstraction reaction that results in 2,5-elimination of pyruvate from 2-succinyl-5-enolpyruvyl-6-hydroxy-3-cyclohexene-1-carboxylate (SEPHCHC) and the formation of 2-succinyl-6-hydroxy-2,4-cyclohexadiene-1-carboxylate (SHCHC). This is 2-succinyl-6-hydroxy-2,4-cyclohexadiene-1-carboxylate synthase from Salmonella choleraesuis (strain SC-B67).